A 309-amino-acid chain; its full sequence is Coenzyme PQQ synthesis protein B (309 aa).

This sequence belongs to the PqqB family.

It participates in cofactor biosynthesis; pyrroloquinoline quinone biosynthesis. Its function is as follows. May be involved in the transport of PQQ or its precursor to the periplasm. This Bradyrhizobium diazoefficiens (strain JCM 10833 / BCRC 13528 / IAM 13628 / NBRC 14792 / USDA 110) protein is Coenzyme PQQ synthesis protein B.